An 85-amino-acid chain; its full sequence is MPNIKSAIKRVKVNEAKTLENTIRKSALKTTIKKCKEAIVTGENTSDAYTAATKALDKAAAKNILHKNTAARKKSRLAKALNAAK.

Belongs to the bacterial ribosomal protein bS20 family.

Its function is as follows. Binds directly to 16S ribosomal RNA. In Ruminiclostridium cellulolyticum (strain ATCC 35319 / DSM 5812 / JCM 6584 / H10) (Clostridium cellulolyticum), this protein is Small ribosomal subunit protein bS20.